We begin with the raw amino-acid sequence, 738 residues long: MSNLEHEAERVEMAAATTEIRQRVLELRQLVQRASYAYYVLDAPILEDVVYDQLYRELQDLETQYPELLTPDSPTQRVGEQPATQFVSVQHRIPLYSLENAFAVADMQAWQDRWQRQGQAIGEQSATLRSPEYVCELKIDGSALALTYENGVLVRGATRGDGVYGEDITANVRTIRSIPLRLDWPDPPPIVEVRGEAFLPLDVFHRLNQEREQAGESLFANPRNAAAGTLRQLDARIVAKRRLDFFAYTLHLPLASARSATQPAAAQQLDLLAVAQSDPAVAAQQLDLSSASQAESVTTHLPQTQWQSLELLQQIGFRVNPHRQLCPTLADVRQYYDHWNHGRLDLPYMTDGVVVKLNSLRLQEHLGFTQKFPRWAIAWKYEPEQAVTEVLNISVNVGRTGALTPVAELRPVQLAGTTVSRATLHNRDRLAELDLHIGDKVVIHKAGEIIPEILQVFPELRPADARPYQLPTHCPECGQPVVQPVDEAVTRCLNVSCPAIVRGAIVHWVGRDAMDIDGVGEKLVRQLVDRGLVNSVADLYRLTVAQLLTLERMGNKLAEKVVAAIAKSQSRPWSRVLYGLGIRHVGSVNAQVLTTAFPSVERLMAASAEDIEAVHGIGPEIAQSIVQWFQTPANHSLIEQLSAAGVQLAQDTVAVPPSQLPQPLAGKTFVLTGTLPTLSRDEARSMIGQAGGKVTDSVSKKTDFLVVGADAGSKLDKAGQLGIPCLSESQLLELLEET.

NAD(+) is bound by residues 48–52 (DVVYD), 97–98 (SL), and glutamate 136. Catalysis depends on lysine 138, which acts as the N6-AMP-lysine intermediate. 4 residues coordinate NAD(+): arginine 159, glutamate 196, lysine 356, and lysine 380. Positions 474, 477, 492, and 497 each coordinate Zn(2+). The BRCT domain maps to 659–738 (QLPQPLAGKT…SQLLELLEET (80 aa)).

It belongs to the NAD-dependent DNA ligase family. LigA subfamily. Requires Mg(2+) as cofactor. Mn(2+) serves as cofactor.

It carries out the reaction NAD(+) + (deoxyribonucleotide)n-3'-hydroxyl + 5'-phospho-(deoxyribonucleotide)m = (deoxyribonucleotide)n+m + AMP + beta-nicotinamide D-nucleotide.. DNA ligase that catalyzes the formation of phosphodiester linkages between 5'-phosphoryl and 3'-hydroxyl groups in double-stranded DNA using NAD as a coenzyme and as the energy source for the reaction. It is essential for DNA replication and repair of damaged DNA. The chain is DNA ligase from Cyanothece sp. (strain PCC 7425 / ATCC 29141).